The following is a 301-amino-acid chain: Tetrahydromethanopterin S-methyltransferase subunit E (301 aa).

The next 5 helical transmembrane spans lie at 85-105 (VIFAIAIGALVASAVHGTYCI), 130-150 (HTPVMMGYAFITTFCILVVSY), 151-171 (IMVAVLAHPFPLTLLAFIWGI), 232-252 (PVTGLAFGMTVFLSGWVTAVF), and 258-278 (LTMGWLSVAAGVILVLLLIIW).

Belongs to the MtrE family. As to quaternary structure, the complex is composed of 8 subunits; MtrA, MtrB, MtrC, MtrD, MtrE, MtrF, MtrG and MtrH.

It localises to the cell membrane. The enzyme catalyses 5-methyl-5,6,7,8-tetrahydromethanopterin + coenzyme M + 2 Na(+)(in) = 5,6,7,8-tetrahydromethanopterin + methyl-coenzyme M + 2 Na(+)(out). Part of a complex that catalyzes the formation of methyl-coenzyme M and tetrahydromethanopterin from coenzyme M and methyl-tetrahydromethanopterin. This is an energy-conserving, sodium-ion translocating step. This chain is Tetrahydromethanopterin S-methyltransferase subunit E, found in Methanococcoides burtonii (strain DSM 6242 / NBRC 107633 / OCM 468 / ACE-M).